The following is a 215-amino-acid chain: LexA repressor (215 aa).

Positions Arg28 to Arg48 form a DNA-binding region, H-T-H motif. Catalysis depends on for autocatalytic cleavage activity residues Ser133 and Lys170.

Belongs to the peptidase S24 family. Homodimer.

The catalysed reaction is Hydrolysis of Ala-|-Gly bond in repressor LexA.. In terms of biological role, represses a number of genes involved in the response to DNA damage (SOS response), including recA and lexA. In the presence of single-stranded DNA, RecA interacts with LexA causing an autocatalytic cleavage which disrupts the DNA-binding part of LexA, leading to derepression of the SOS regulon and eventually DNA repair. The chain is LexA repressor from Burkholderia mallei (strain NCTC 10247).